Here is a 309-residue protein sequence, read N- to C-terminus: Ornithine carbamoyltransferase (309 aa).

Residues 51–54, glutamine 78, arginine 102, and 129–132 each bind carbamoyl phosphate; these read STRT and HPVQ. L-ornithine contacts are provided by residues asparagine 159, aspartate 223, and 227–228; that span reads SM. Carbamoyl phosphate is bound by residues 263–264 and arginine 291; that span reads CL.

Belongs to the aspartate/ornithine carbamoyltransferase superfamily. OTCase family.

It localises to the cytoplasm. The enzyme catalyses carbamoyl phosphate + L-ornithine = L-citrulline + phosphate + H(+). Its pathway is amino-acid biosynthesis; L-arginine biosynthesis; L-arginine from L-ornithine and carbamoyl phosphate: step 1/3. Its function is as follows. Reversibly catalyzes the transfer of the carbamoyl group from carbamoyl phosphate (CP) to the N(epsilon) atom of ornithine (ORN) to produce L-citrulline. The sequence is that of Ornithine carbamoyltransferase from Nitratiruptor sp. (strain SB155-2).